An 83-amino-acid polypeptide reads, in one-letter code: Hainantoxin-III 11 (83 aa).

Residues M1–A21 form the signal peptide. Residues S22–R48 constitute a propeptide that is removed on maturation. 3 disulfide bridges follow: C50/C65, C57/C70, and C64/C77. Leucine amide is present on L81.

Belongs to the neurotoxin 10 (Hwtx-1) family. 15 (Hntx-3) subfamily. Monomer. As to expression, expressed by the venom gland.

It is found in the secreted. Its function is as follows. Selective antagonist of neuronal tetrodotoxin (TTX)-sensitive voltage-gated sodium channels (IC(50)=1270 nM on Nav1.1/SCN1A, 270 nM on Nav1.2/SCN2A, 491 nM on Nav1.3/SCN3A and 232 nM on Nav1.7/SCN9A). This toxin suppress Nav1.7 current amplitude without significantly altering the activation, inactivation, and repriming kinetics. Short extreme depolarizations partially activate the toxin-bound channel, indicating voltage-dependent inhibition of this toxin. This toxin increases the deactivation of the Nav1.7 current after extreme depolarizations. The toxin-Nav1.7 complex is gradually dissociated upon prolonged strong depolarizations in a voltage-dependent manner, and the unbound toxin rebinds to Nav1.7 after a long repolarization. Moreover, analysis of chimeric channels showed that the DIIS3-S4 linker is critical for toxin binding to Nav1.7. These data are consistent with this toxin interacting with Nav1.7 site 4 and trapping the domain II voltage sensor in the closed state. The protein is Hainantoxin-III 11 of Cyriopagopus hainanus (Chinese bird spider).